A 312-amino-acid chain; its full sequence is Protoheme IX farnesyltransferase (312 aa).

8 consecutive transmembrane segments (helical) span residues 34–54, 56–76, 119–139, 152–172, 179–199, 225–245, 247–267, and 283–303; these read LVIF…HPVL, FTAI…NMAL, ALVN…YVVI, IVIG…AATG, LLLF…LALF, ILLY…LGYF, WVYG…AINV, and LFAF…LDVL.

It belongs to the UbiA prenyltransferase family. Protoheme IX farnesyltransferase subfamily.

The protein localises to the cell inner membrane. The catalysed reaction is heme b + (2E,6E)-farnesyl diphosphate + H2O = Fe(II)-heme o + diphosphate. The protein operates within porphyrin-containing compound metabolism; heme O biosynthesis; heme O from protoheme: step 1/1. Its function is as follows. Converts heme B (protoheme IX) to heme O by substitution of the vinyl group on carbon 2 of heme B porphyrin ring with a hydroxyethyl farnesyl side group. In Nitrobacter hamburgensis (strain DSM 10229 / NCIMB 13809 / X14), this protein is Protoheme IX farnesyltransferase.